The following is a 108-amino-acid chain: Small ribosomal subunit protein bS6 (108 aa).

Belongs to the bacterial ribosomal protein bS6 family.

Binds together with bS18 to 16S ribosomal RNA. This Trichormus variabilis (strain ATCC 29413 / PCC 7937) (Anabaena variabilis) protein is Small ribosomal subunit protein bS6.